The following is a 542-amino-acid chain: Berberine bridge enzyme-like 25 (542 aa).

The signal sequence occupies residues 1 to 30; sequence MGNSKPLPTISCISVFALYFSFYTITLTSS. Cysteines 40 and 104 form a disulfide. Residue N61 is glycosylated (N-linked (GlcNAc...) asparagine). In terms of domain architecture, FAD-binding PCMH-type spans 82-258; that stretch reads TMPKPGFIFK…LSWKIKLVPV (177 aa). H119 carries the post-translational modification Pros-8alpha-FAD histidine. 2 N-linked (GlcNAc...) asparagine glycosylation sites follow: N308 and N436.

Belongs to the oxygen-dependent FAD-linked oxidoreductase family. FAD serves as cofactor.

It localises to the secreted. It is found in the cell wall. This is Berberine bridge enzyme-like 25 from Arabidopsis thaliana (Mouse-ear cress).